A 284-amino-acid polypeptide reads, in one-letter code: Bifunctional protein FolD (284 aa).

NADP(+) is bound by residues 165–167, threonine 192, and valine 233; that span reads GRG.

It belongs to the tetrahydrofolate dehydrogenase/cyclohydrolase family. In terms of assembly, homodimer.

It carries out the reaction (6R)-5,10-methylene-5,6,7,8-tetrahydrofolate + NADP(+) = (6R)-5,10-methenyltetrahydrofolate + NADPH. The catalysed reaction is (6R)-5,10-methenyltetrahydrofolate + H2O = (6R)-10-formyltetrahydrofolate + H(+). Its pathway is one-carbon metabolism; tetrahydrofolate interconversion. Functionally, catalyzes the oxidation of 5,10-methylenetetrahydrofolate to 5,10-methenyltetrahydrofolate and then the hydrolysis of 5,10-methenyltetrahydrofolate to 10-formyltetrahydrofolate. This Corynebacterium glutamicum (strain R) protein is Bifunctional protein FolD.